Reading from the N-terminus, the 795-residue chain is Protocadherin beta-12 (795 aa).

The N-terminal stretch at methionine 1–alanine 26 is a signal peptide. Topologically, residues glycine 27–leucine 690 are extracellular. Cadherin domains are found at residues valine 35–phenylalanine 133, methionine 138–phenylalanine 242, tyrosine 247–isoleucine 347, isoleucine 352–phenylalanine 451, and tyrosine 456–valine 561. Asparagine 418, asparagine 436, asparagine 487, and asparagine 567 each carry an N-linked (GlcNAc...) asparagine glycan. The Cadherin 6 domain maps to glycine 568–leucine 671. Residues valine 691–valine 711 traverse the membrane as a helical segment. The Cytoplasmic portion of the chain corresponds to arginine 712–phenylalanine 795.

The protein localises to the cell membrane. Functionally, potential calcium-dependent cell-adhesion protein. May be involved in the establishment and maintenance of specific neuronal connections in the brain. This Homo sapiens (Human) protein is Protocadherin beta-12 (PCDHB12).